Here is a 229-residue protein sequence, read N- to C-terminus: Endonuclease V (229 aa).

Residues aspartate 43 and aspartate 111 each contribute to the Mg(2+) site.

The protein belongs to the endonuclease V family. Requires Mg(2+) as cofactor.

It is found in the cytoplasm. The enzyme catalyses Endonucleolytic cleavage at apurinic or apyrimidinic sites to products with a 5'-phosphate.. In terms of biological role, DNA repair enzyme involved in the repair of deaminated bases. Selectively cleaves double-stranded DNA at the second phosphodiester bond 3' to a deoxyinosine leaving behind the intact lesion on the nicked DNA. The protein is Endonuclease V of Rippkaea orientalis (strain PCC 8801 / RF-1) (Cyanothece sp. (strain PCC 8801)).